We begin with the raw amino-acid sequence, 282 residues long: Putative hydrolase BceJ2315_61450 (282 aa).

Mg(2+) contacts are provided by E124, E126, and D155.

Belongs to the FAH family. It depends on Mg(2+) as a cofactor.

In Burkholderia cenocepacia (strain ATCC BAA-245 / DSM 16553 / LMG 16656 / NCTC 13227 / J2315 / CF5610) (Burkholderia cepacia (strain J2315)), this protein is Putative hydrolase BceJ2315_61450.